Here is a 51-residue protein sequence, read N- to C-terminus: Large ribosomal subunit protein eL39 (51 aa).

The protein belongs to the eukaryotic ribosomal protein eL39 family.

The sequence is that of Large ribosomal subunit protein eL39 (RpL39) from Drosophila melanogaster (Fruit fly).